A 226-amino-acid polypeptide reads, in one-letter code: Pyridoxal 5'-phosphate synthase subunit Pdx2 (226 aa).

52 to 54 serves as a coordination point for L-glutamine; that stretch reads GES. The active-site Nucleophile is cysteine 87. Residues arginine 124 and 156–157 each bind L-glutamine; that span reads IR. Residues histidine 199 and glutamate 201 each act as charge relay system in the active site.

The protein belongs to the glutaminase PdxT/SNO family. As to quaternary structure, in the presence of PdxS, forms a dodecamer of heterodimers. Only shows activity in the heterodimer.

The catalysed reaction is aldehydo-D-ribose 5-phosphate + D-glyceraldehyde 3-phosphate + L-glutamine = pyridoxal 5'-phosphate + L-glutamate + phosphate + 3 H2O + H(+). It carries out the reaction L-glutamine + H2O = L-glutamate + NH4(+). Its pathway is cofactor biosynthesis; pyridoxal 5'-phosphate biosynthesis. Catalyzes the hydrolysis of glutamine to glutamate and ammonia as part of the biosynthesis of pyridoxal 5'-phosphate. The resulting ammonia molecule is channeled to the active site of PdxS. This Plasmodium berghei protein is Pyridoxal 5'-phosphate synthase subunit Pdx2.